The sequence spans 158 residues: MKQIPMTVRGADKLREELDYLKGVRRPKIISDIADAREHGDLKENAEYHAAREQQGFCEGRIQEIEAKLSNAQVIDITKMPNNGRVIFGATVRVLNLNTEEEQNYRIVGDDEADFKQNLISVNSPIARGLIGKEVDDVVVIHTPGGEVEYEILSVEYV.

The protein belongs to the GreA/GreB family.

Necessary for efficient RNA polymerase transcription elongation past template-encoded arresting sites. The arresting sites in DNA have the property of trapping a certain fraction of elongating RNA polymerases that pass through, resulting in locked ternary complexes. Cleavage of the nascent transcript by cleavage factors such as GreA or GreB allows the resumption of elongation from the new 3'terminus. GreA releases sequences of 2 to 3 nucleotides. The protein is Transcription elongation factor GreA of Yersinia pestis.